Consider the following 567-residue polypeptide: Glutamine-dependent NAD(+) synthetase (567 aa).

The region spanning 2 to 242 (LNLTLAQLNF…EDILTVTLDL (241 aa)) is the CN hydrolase domain. Glu-41 serves as the catalytic Proton acceptor; for glutaminase activity. The active-site For glutaminase activity is Lys-109. Tyr-115 provides a ligand contact to L-glutamine. Residue Cys-145 is the Nucleophile; for glutaminase activity of the active site. L-glutamine is bound by residues Ser-172 and Lys-178. Residues 287 to 567 (PKEEEEIYAA…RMPVTNKFFK (281 aa)) form a ligase region. 316 to 323 (GLSGGIDS) serves as a coordination point for ATP. Asn-399 contacts deamido-NAD(+). Thr-423 contacts ATP. Residues Glu-428 and Lys-538 each coordinate deamido-NAD(+).

It in the C-terminal section; belongs to the NAD synthetase family.

The enzyme catalyses deamido-NAD(+) + L-glutamine + ATP + H2O = L-glutamate + AMP + diphosphate + NAD(+) + H(+). It functions in the pathway cofactor biosynthesis; NAD(+) biosynthesis; NAD(+) from deamido-NAD(+) (L-Gln route): step 1/1. Functionally, catalyzes the ATP-dependent amidation of deamido-NAD to form NAD. Uses L-glutamine as a nitrogen source. The chain is Glutamine-dependent NAD(+) synthetase from Aquifex aeolicus (strain VF5).